Here is a 118-residue protein sequence, read N- to C-terminus: Transcription factor PAR1 (118 aa).

Residues 1 to 58 (MEETLATPDATRRSLSPSCSATVKSRAAGFERRTKRRLSETNASVREDREEAEEEEDE) are disordered. Residues 13-23 (RSLSPSCSATV) show a composition bias toward polar residues. A bHLH domain is found at 43–92 (ASVREDREEAEEEEDEVKEKIEALQRIIPGGAALGVDALFEETAGYILSL).

It belongs to the bHLH protein family. In terms of assembly, homodimer.

It is found in the nucleus. Functionally, atypical bHLH transcription factor that acts as a negative regulator of a variety of shade avoidance syndrome (SAS) responses, including seedling elongation and photosynthetic pigment accumulation. Acts as a direct transcriptional repressor of two auxin-responsive genes, SAUR15 and SAUR68. May function in integrating shade and hormone transcriptional networks in response to light and auxin changes. The polypeptide is Transcription factor PAR1 (PAR1) (Arabidopsis thaliana (Mouse-ear cress)).